Consider the following 179-residue polypeptide: Protein YjaZ (179 aa).

This Escherichia coli (strain K12) protein is Protein YjaZ.